A 314-amino-acid polypeptide reads, in one-letter code: DNA topoisomerase I (314 aa).

The Topo IB-type catalytic domain maps to 77 to 314 (IQNRNAKRDR…VDHVKSSTDG (238 aa)). Catalysis depends on tyrosine 274, which acts as the O-(3'-phospho-DNA)-tyrosine intermediate.

Belongs to the type IB topoisomerase family.

The protein resides in the virion. The catalysed reaction is ATP-independent breakage of single-stranded DNA, followed by passage and rejoining.. Its function is as follows. Releases the supercoiling and torsional tension of DNA introduced during the DNA replication and transcription by transiently cleaving and rejoining one strand of the DNA duplex. Introduces a single-strand break via transesterification at the specific target site 5'-[CT]CCTTp site in duplex DNA. The scissile phosphodiester is attacked by the catalytic tyrosine of the enzyme, resulting in the formation of a DNA-(3'-phosphotyrosyl)-enzyme intermediate and the expulsion of a 5'-OH DNA strand. The free DNA strand then undergoes passage around the unbroken strand thus removing DNA supercoils. Finally, in the religation step, the DNA 5'-OH attacks the covalent intermediate to expel the active-site tyrosine and restore the DNA phosphodiester backbone. In Cynomys gunnisoni (Gunnison's prairie dog), this protein is DNA topoisomerase I (OPG111).